Reading from the N-terminus, the 616-residue chain is Chaperone protein HscA (616 aa).

The protein belongs to the heat shock protein 70 family.

Its function is as follows. Chaperone involved in the maturation of iron-sulfur cluster-containing proteins. Has a low intrinsic ATPase activity which is markedly stimulated by HscB. Involved in the maturation of IscU. The protein is Chaperone protein HscA of Escherichia coli O7:K1 (strain IAI39 / ExPEC).